We begin with the raw amino-acid sequence, 292 residues long: AKT-interacting protein (292 aa).

The interval 1-64 (MNPFWNMSSA…ISPSPSVQPT (64 aa)) is disordered. The segment covering 14-23 (KRSDNDEKIA) has biased composition (basic and acidic residues). A UBC core domain is found at 75-223 (YLEYSLLAEF…VVDSVKLCNS (149 aa)). The disordered stretch occupies residues 273 to 292 (SWVKPGSVLPFSKEENSLQT).

This sequence belongs to the ubiquitin-conjugating enzyme family. FTS subfamily.

The protein resides in the cytoplasm. It is found in the cell membrane. In terms of biological role, may function to promote vesicle trafficking and/or fusion. May also regulate apoptosis. This chain is AKT-interacting protein (aktip), found in Xenopus tropicalis (Western clawed frog).